The primary structure comprises 215 residues: MAKKNSNKQQEILDYVYKCVHENGYPPSVREICSAVGFKSTSTVHSYLQKLIDKGHLQKDPTKPRAIKILNKTSQVQENRTNKEGYYTSREMVDVPVVGRVTAGQPILAVENITDTFPLPVDFVQNSDAFMLRIQGESMIDAGILDKDFVLVRQQSSANNGDIVVALIGDEATCKTFYREKDHIRLQPQNSSMEPIVVKDELSILGKVIGVFRRM.

Residues 29 to 49 constitute a DNA-binding region (H-T-H motif); sequence VREICSAVGFKSTSTVHSYLQ. Catalysis depends on for autocatalytic cleavage activity residues S138 and K175.

Belongs to the peptidase S24 family. In terms of assembly, homodimer.

The catalysed reaction is Hydrolysis of Ala-|-Gly bond in repressor LexA.. Represses a number of genes involved in the response to DNA damage (SOS response), including recA and lexA. In the presence of single-stranded DNA, RecA interacts with LexA causing an autocatalytic cleavage which disrupts the DNA-binding part of LexA, leading to derepression of the SOS regulon and eventually DNA repair. This chain is LexA repressor, found in Ruminiclostridium cellulolyticum (strain ATCC 35319 / DSM 5812 / JCM 6584 / H10) (Clostridium cellulolyticum).